The following is a 286-amino-acid chain: Aquaporin PIP1-1 (286 aa).

The disordered stretch occupies residues 1 to 34 (MEGKEEDVRLGANKFSERQPIGTAAQSDKGYKEP). Over 1 to 54 (MEGKEEDVRLGANKFSERQPIGTAAQSDKGYKEPPPAPLFEPGELTSWSFYRAG) the chain is Cytoplasmic. Residues 55–75 (IAEFMATFLFLYITILTVMGV) traverse the membrane as a helical segment. Residues 76–88 (VKSNSKCSTVGIQ) are Extracellular-facing. Residues 89 to 109 (GIAWAFGGMIFALVYCTAGIS) traverse the membrane as a helical segment. At 110-131 (GGHINPAVTFGLFLARKLSLTR) the chain is on the cytoplasmic side. Residues 114 to 116 (NPA) carry the NPA 1 motif. The chain crosses the membrane as a helical span at residues 132–152 (ALFYMVMQCLGAICGAGVVKG). Over 153–174 (YQKGLYESNGGGANVVAPGYTK) the chain is Extracellular. The chain crosses the membrane as a helical span at residues 175–195 (GDGLGAEIVGTFILVYTVFSA). Residues 196 to 208 (TDAKRNARDSHVP) lie on the Cytoplasmic side of the membrane. A helical membrane pass occupies residues 209–229 (ILAPLPIGFAVFLVHLATIPI). Residues 230 to 256 (TGTGINPARSLGAAIIYNKKHAWDDHW) are Extracellular-facing. An NPA 2 motif is present at residues 235–237 (NPA). Residues 257–277 (IFWVGPFIGAALAAIYHQIVI) traverse the membrane as a helical segment. The Cytoplasmic portion of the chain corresponds to 278–286 (RAIPFKSRP).

It belongs to the MIP/aquaporin (TC 1.A.8) family. PIP (TC 1.A.8.11) subfamily. In terms of tissue distribution, expressed in leaves, roots, stems, flowers and fruits, with highest levels in roots.

It localises to the cell membrane. Water channel required to facilitate the transport of water across cell membrane; mercury-insensitive. Promotes primary root elongation and root hair formation. Contributes to the tolerance to multiple abiotic stresses including salt (NaCl), cold and water deprivation, by modulating cytosolic K(+)/Na(+) ratio, maintaining osmotic balance, and reducing membrane injury (e.g. oxidative injury). Also regulates the expression of abscisic acid (ABA)-responsive genes during dehydration and salt stresses. The protein is Aquaporin PIP1-1 of Musa acuminata (Banana).